Here is a 269-residue protein sequence, read N- to C-terminus: 4-hydroxy-tetrahydrodipicolinate reductase (269 aa).

NAD(+) contacts are provided by residues 8–13 (GAAGRM) and glutamate 34. Arginine 35 is a binding site for NADP(+). NAD(+) contacts are provided by residues 98-100 (GTT) and 122-125 (APNY). Histidine 155 functions as the Proton donor/acceptor in the catalytic mechanism. Histidine 156 is a (S)-2,3,4,5-tetrahydrodipicolinate binding site. The Proton donor role is filled by lysine 159. Residue 165–166 (GT) participates in (S)-2,3,4,5-tetrahydrodipicolinate binding.

The protein belongs to the DapB family.

Its subcellular location is the cytoplasm. The enzyme catalyses (S)-2,3,4,5-tetrahydrodipicolinate + NAD(+) + H2O = (2S,4S)-4-hydroxy-2,3,4,5-tetrahydrodipicolinate + NADH + H(+). It catalyses the reaction (S)-2,3,4,5-tetrahydrodipicolinate + NADP(+) + H2O = (2S,4S)-4-hydroxy-2,3,4,5-tetrahydrodipicolinate + NADPH + H(+). The protein operates within amino-acid biosynthesis; L-lysine biosynthesis via DAP pathway; (S)-tetrahydrodipicolinate from L-aspartate: step 4/4. Catalyzes the conversion of 4-hydroxy-tetrahydrodipicolinate (HTPA) to tetrahydrodipicolinate. This is 4-hydroxy-tetrahydrodipicolinate reductase from Vibrio vulnificus (strain YJ016).